We begin with the raw amino-acid sequence, 401 residues long: Imidazolonepropionase (401 aa).

Fe(3+)-binding residues include H70 and H72. Residues H70 and H72 each contribute to the Zn(2+) site. 4-imidazolone-5-propanoate contacts are provided by R79, Y142, and H175. Y142 contributes to the N-formimidoyl-L-glutamate binding site. H238 is a binding site for Fe(3+). H238 is a Zn(2+) binding site. Q241 lines the 4-imidazolone-5-propanoate pocket. D313 lines the Fe(3+) pocket. A Zn(2+)-binding site is contributed by D313. The N-formimidoyl-L-glutamate site is built by N315 and G317. T318 provides a ligand contact to 4-imidazolone-5-propanoate.

It belongs to the metallo-dependent hydrolases superfamily. HutI family. Zn(2+) is required as a cofactor. Fe(3+) serves as cofactor.

The protein resides in the cytoplasm. It carries out the reaction 4-imidazolone-5-propanoate + H2O = N-formimidoyl-L-glutamate. The protein operates within amino-acid degradation; L-histidine degradation into L-glutamate; N-formimidoyl-L-glutamate from L-histidine: step 3/3. Its function is as follows. Catalyzes the hydrolytic cleavage of the carbon-nitrogen bond in imidazolone-5-propanoate to yield N-formimidoyl-L-glutamate. It is the third step in the universal histidine degradation pathway. The chain is Imidazolonepropionase from Xanthomonas axonopodis pv. citri (strain 306).